A 475-amino-acid chain; its full sequence is Ataxin-10 (475 aa).

An Omega-N-methylarginine modification is found at Arg10. Phosphoserine occurs at positions 12 and 77. The residue at position 82 (Thr82) is a Phosphothreonine. Ser430 carries the post-translational modification Phosphoserine.

Belongs to the ataxin-10 family. In terms of assembly, homooligomer. Interacts with GNB2. Interacts with IQCB1. Interacts with OGT. Interacts with PLK1. In terms of processing, polyubiquitinated. Phosphorylation at Ser-12 by AURKB promotes the association of ATXN10 with PLK1. Phosphorylation at Ser-77 and Thr-82 by PLK1 may play a role in the regulation of cytokinesis and may stimulate the proteasome-mediated degradation of ATXN10. In high cell density areas; cerebellar cortex, dentate gyrus, hippocampus, anterior olfactory nucleus, primary olfactory cortex.

It is found in the cytoplasm. The protein resides in the perinuclear region. The protein localises to the midbody. It localises to the cytoskeleton. Its subcellular location is the cilium basal body. It is found in the microtubule organizing center. The protein resides in the centrosome. The protein localises to the centriole. In terms of biological role, may play a role in the regulation of cytokinesis. May play a role in signaling by stimulating protein glycosylation. Induces neuritogenesis by activating the Ras-MAP kinase pathway and is necessary for the survival of cerebellar neurons. Does not appear to play a major role in ciliogenesis. The protein is Ataxin-10 (Atxn10) of Mus musculus (Mouse).